Here is a 441-residue protein sequence, read N- to C-terminus: Zinc finger and BTB domain-containing protein 26 (441 aa).

Residues 33–97 (CDVTVLIDDI…CYSGVLEFPE (65 aa)) enclose the BTB domain. The disordered stretch occupies residues 134 to 177 (DSKEGCEPQSASPQSKEQQGDARGSPKQDSPCIHPSEDSMDMED). Residue lysine 184 forms a Glycyl lysine isopeptide (Lys-Gly) (interchain with G-Cter in SUMO2) linkage. Positions 194–216 (VRSKKDQNQFISSEPTALHSSEP) are disordered. The segment covering 201–216 (NQFISSEPTALHSSEP) has biased composition (polar residues). A Glycyl lysine isopeptide (Lys-Gly) (interchain with G-Cter in SUMO2) cross-link involves residue lysine 255. C2H2-type zinc fingers lie at residues 273-295 (HQCPKCTRVFRHLENYANHLKMH), 298-320 (FMCLLCGKTFTQKGNLHRHMRVH), 326-348 (FQCKICGKTFSQKCSLQDHLNLH), and 354-377 (HKCNYCDMVFAHKPVLRKHLKQLH). A Glycyl lysine isopeptide (Lys-Gly) (interchain with G-Cter in SUMO2) cross-link involves residue lysine 329.

In terms of tissue distribution, ubiquitous.

It is found in the nucleus. May be involved in transcriptional regulation. The polypeptide is Zinc finger and BTB domain-containing protein 26 (ZBTB26) (Homo sapiens (Human)).